We begin with the raw amino-acid sequence, 1047 residues long: Ubiquitin carboxyl-terminal hydrolase 28 (1047 aa).

Disordered stretches follow at residues 60–95 (DQEPVQNTAAAEPSSWEGSAVGKEPPQGGAAFDPEK) and 110–138 (SPKAHAAERPQEVHSPEHKNRSKRKRCEV). The region spanning 94-113 (EKKGDVHSAVAYGQLESPKA) is the UIM domain. Basic and acidic residues predominate over residues 111–128 (PKAHAAERPQEVHSPEHK). Positions 156-651 (VGMKNIGNTC…SAYCLMYISD (496 aa)) constitute a USP domain. The active-site Nucleophile is cysteine 165. Residues 461–486 (STEDSQMMDRQSQGESLILGTPSQPD) show a composition bias toward polar residues. The interval 461-528 (STEDSQMMDR…SEPPAEMSDC (68 aa)) is disordered. Residues 489-498 (LDGKDGKPED) show a composition bias toward basic and acidic residues. A compositionally biased stretch (polar residues) spans 504 to 516 (ANSSPQQQLNAPL). The Proton acceptor role is filled by histidine 601. The tract at residues 694–735 (EAEEWEEEQSCKIPSTASESQELSPESGLDPPAAHEQSLRSL) is disordered. Polar residues predominate over residues 705 to 717 (KIPSTASESQELS).

The protein belongs to the peptidase C19 family. USP28 subfamily.

It localises to the nucleus. It is found in the nucleoplasm. It carries out the reaction Thiol-dependent hydrolysis of ester, thioester, amide, peptide and isopeptide bonds formed by the C-terminal Gly of ubiquitin (a 76-residue protein attached to proteins as an intracellular targeting signal).. Deubiquitinase involved in DNA damage response checkpoint and MYC proto-oncogene stability. Involved in DNA damage induced apoptosis by specifically deubiquitinating proteins of the DNA damage pathway such as CLSPN. Also involved in G2 DNA damage checkpoint, by deubiquitinating CLSPN, and preventing its degradation by the anaphase promoting complex/cyclosome (APC/C). Specifically deubiquitinates MYC in the nucleoplasm, leading to prevent MYC degradation by the proteasome. Deubiquitinates ZNF304, hence may prevent ZNF304 degradation by the proteasome, leading to the activated KRAS-mediated promoter hypermethylation and transcriptional silencing of tumor suppressor genes (TSGs). The protein is Ubiquitin carboxyl-terminal hydrolase 28 (USP28) of Gallus gallus (Chicken).